The following is a 182-amino-acid chain: Orotate phosphoribosyltransferase (182 aa).

5-phospho-alpha-D-ribose 1-diphosphate is bound by residues arginine 96, lysine 97, lysine 100, histidine 102, and 122–130; that span reads EDTSTTGGS. Residues threonine 126 and arginine 154 each contribute to the orotate site.

It belongs to the purine/pyrimidine phosphoribosyltransferase family. PyrE subfamily. In terms of assembly, homodimer. Mg(2+) is required as a cofactor.

It carries out the reaction orotidine 5'-phosphate + diphosphate = orotate + 5-phospho-alpha-D-ribose 1-diphosphate. Its pathway is pyrimidine metabolism; UMP biosynthesis via de novo pathway; UMP from orotate: step 1/2. Its function is as follows. Catalyzes the transfer of a ribosyl phosphate group from 5-phosphoribose 1-diphosphate to orotate, leading to the formation of orotidine monophosphate (OMP). This Streptomyces avermitilis (strain ATCC 31267 / DSM 46492 / JCM 5070 / NBRC 14893 / NCIMB 12804 / NRRL 8165 / MA-4680) protein is Orotate phosphoribosyltransferase.